The chain runs to 356 residues: Delta(7)-sterol 5(6)-desaturase (356 aa).

Helical transmembrane passes span 87-107 (LTLYLITWLFGVCVYYLFAGL), 134-154 (QANIAFPIMAIFTVPWFLAEV), and 171-191 (WYDYLQIPFFIAFTDLCIYWI). The Fatty acid hydroxylase domain occupies 179 to 303 (FFIAFTDLCI…FTTLWDRLGG (125 aa)). Residues 192-196 (HRGLH) carry the Histidine box-1 motif. The Histidine box-2 signature appears at 205–209 (HKPHH). The helical transmembrane segment at 235 to 255 (YIFPFLFPLSKIASVAFFVFV) threads the bilayer. Positions 280–284 (HTMHH) match the Histidine box-3 motif.

This sequence belongs to the sterol desaturase family. It depends on Fe cation as a cofactor.

Its subcellular location is the endoplasmic reticulum membrane. It catalyses the reaction a Delta(7)-sterol + 2 Fe(II)-[cytochrome b5] + O2 + 2 H(+) = a Delta(5),Delta(7)-sterol + 2 Fe(III)-[cytochrome b5] + 2 H2O. The protein operates within steroid metabolism; ergosterol biosynthesis; ergosterol from zymosterol: step 3/5. In terms of biological role, catalyzes the introduction of a C-5 double bond in the B ring of ergosterol. May contribute to the regulation of ergosterol biosynthesis. The chain is Delta(7)-sterol 5(6)-desaturase (ERG3) from Leptosphaeria maculans (Blackleg fungus).